A 358-amino-acid chain; its full sequence is UDP-N-acetylglucosamine--N-acetylmuramyl-(pentapeptide) pyrophosphoryl-undecaprenol N-acetylglucosamine transferase (358 aa).

Residues 10 to 12 (TGG), N124, R165, S191, I246, and Q291 each bind UDP-N-acetyl-alpha-D-glucosamine.

Belongs to the glycosyltransferase 28 family. MurG subfamily.

Its subcellular location is the cell inner membrane. The enzyme catalyses di-trans,octa-cis-undecaprenyl diphospho-N-acetyl-alpha-D-muramoyl-L-alanyl-D-glutamyl-meso-2,6-diaminopimeloyl-D-alanyl-D-alanine + UDP-N-acetyl-alpha-D-glucosamine = di-trans,octa-cis-undecaprenyl diphospho-[N-acetyl-alpha-D-glucosaminyl-(1-&gt;4)]-N-acetyl-alpha-D-muramoyl-L-alanyl-D-glutamyl-meso-2,6-diaminopimeloyl-D-alanyl-D-alanine + UDP + H(+). The protein operates within cell wall biogenesis; peptidoglycan biosynthesis. Functionally, cell wall formation. Catalyzes the transfer of a GlcNAc subunit on undecaprenyl-pyrophosphoryl-MurNAc-pentapeptide (lipid intermediate I) to form undecaprenyl-pyrophosphoryl-MurNAc-(pentapeptide)GlcNAc (lipid intermediate II). The protein is UDP-N-acetylglucosamine--N-acetylmuramyl-(pentapeptide) pyrophosphoryl-undecaprenol N-acetylglucosamine transferase of Citrifermentans bemidjiense (strain ATCC BAA-1014 / DSM 16622 / JCM 12645 / Bem) (Geobacter bemidjiensis).